We begin with the raw amino-acid sequence, 197 residues long: Probable nicotinate-nucleotide adenylyltransferase (197 aa).

Belongs to the NadD family.

It catalyses the reaction nicotinate beta-D-ribonucleotide + ATP + H(+) = deamido-NAD(+) + diphosphate. The protein operates within cofactor biosynthesis; NAD(+) biosynthesis; deamido-NAD(+) from nicotinate D-ribonucleotide: step 1/1. In terms of biological role, catalyzes the reversible adenylation of nicotinate mononucleotide (NaMN) to nicotinic acid adenine dinucleotide (NaAD). The protein is Probable nicotinate-nucleotide adenylyltransferase of Bordetella pertussis (strain Tohama I / ATCC BAA-589 / NCTC 13251).